The chain runs to 469 residues: GTPase Der (469 aa).

2 EngA-type G domains span residues 3-166 (PVIA…PEDE) and 177-350 (LRLA…ESAN). Residues 9-16 (GRPNVGKS), 56-60 (DTGGI), 118-121 (NKVD), 183-190 (GRPNVGKS), 230-234 (DTAGV), and 295-298 (NKWD) contribute to the GTP site. Positions 351–435 (LKVSPAKLTQ…PVKIEFKTSE (85 aa)) constitute a KH-like domain.

This sequence belongs to the TRAFAC class TrmE-Era-EngA-EngB-Septin-like GTPase superfamily. EngA (Der) GTPase family. As to quaternary structure, associates with the 50S ribosomal subunit.

Functionally, GTPase that plays an essential role in the late steps of ribosome biogenesis. This Acinetobacter baumannii (strain ACICU) protein is GTPase Der.